Here is a 114-residue protein sequence, read N- to C-terminus: MENAFKSHLQFTEKAIKKIKNLIEIEKNHDLKLRIYINGGGCSGFQYQFIFDTSINEDDIIITQSEVSLIIDPISLQYLYGGQIDYLENLEGSKFIVYNPNAKNTCGCGSSFSI.

Residues Cys-42, Cys-106, and Cys-108 each contribute to the iron-sulfur cluster site.

It belongs to the HesB/IscA family. In terms of assembly, homodimer. Iron-sulfur cluster is required as a cofactor.

Functionally, required for insertion of 4Fe-4S clusters for at least IspG. This is Iron-sulfur cluster insertion protein ErpA from Buchnera aphidicola subsp. Acyrthosiphon pisum (strain APS) (Acyrthosiphon pisum symbiotic bacterium).